The primary structure comprises 325 residues: NADH-quinone oxidoreductase subunit H (325 aa).

8 consecutive transmembrane segments (helical) span residues 11–31 (ILIS…CGAF), 81–101 (VIFT…FAIV), 114–134 (IGIL…LFAG), 149–169 (ASAQ…GVVA), 186–206 (MWNV…GVAV), 237–257 (FFVG…TLFF), 265–285 (LPPF…FILI), and 304–324 (VCLP…LYNA).

It belongs to the complex I subunit 1 family. In terms of assembly, NDH-1 is composed of 13 different subunits. Subunits NuoA, H, J, K, L, M, N constitute the membrane sector of the complex.

It localises to the cell inner membrane. The enzyme catalyses a quinone + NADH + 5 H(+)(in) = a quinol + NAD(+) + 4 H(+)(out). Its function is as follows. NDH-1 shuttles electrons from NADH, via FMN and iron-sulfur (Fe-S) centers, to quinones in the respiratory chain. The immediate electron acceptor for the enzyme in this species is believed to be ubiquinone. Couples the redox reaction to proton translocation (for every two electrons transferred, four hydrogen ions are translocated across the cytoplasmic membrane), and thus conserves the redox energy in a proton gradient. This subunit may bind ubiquinone. In Serratia proteamaculans (strain 568), this protein is NADH-quinone oxidoreductase subunit H.